Consider the following 56-residue polypeptide: Sperm protamine P1 (56 aa).

A disordered region spans residues Arg-1 to Arg-56.

In terms of processing, P2 is phosphorylated in immature sperm. It is dephosphorylated in mature sperm allowing a stronger interaction with DNA. As to expression, testis.

The protein localises to the nucleus. It is found in the chromosome. Functionally, protamines substitute for histones in the chromatin of sperm during the haploid phase of spermatogenesis. They compact sperm DNA into a highly condensed, stable and inactive complex. In terms of biological role, octopus spermiogenesis is characterized by a double nuclear protein transition: Histones are first replaced by P1, which allows the chromatin to adopt a shape that is not as relaxed as with histones. The majority of P1 is later replaced by P2, forming a compact chromatin. P2 is the main protamine of sperm. This chain is Sperm protamine P1, found in Octopus vulgaris (Common octopus).